The chain runs to 88 residues: ATP synthase subunit c 2 (88 aa).

2 helical membrane-spanning segments follow: residues 4–24 (FSWV…GTGI) and 53–73 (IGLA…MIIL).

Belongs to the ATPase C chain family. In terms of assembly, F-type ATPases have 2 components, F(1) - the catalytic core - and F(0) - the membrane proton channel. F(1) has five subunits: alpha(3), beta(3), gamma(1), delta(1), epsilon(1). F(0) has three main subunits: a(1), b(2) and c(10-14). The alpha and beta chains form an alternating ring which encloses part of the gamma chain. F(1) is attached to F(0) by a central stalk formed by the gamma and epsilon chains, while a peripheral stalk is formed by the delta and b chains.

It is found in the cell inner membrane. In terms of biological role, f(1)F(0) ATP synthase produces ATP from ADP in the presence of a proton or sodium gradient. F-type ATPases consist of two structural domains, F(1) containing the extramembraneous catalytic core and F(0) containing the membrane proton channel, linked together by a central stalk and a peripheral stalk. During catalysis, ATP synthesis in the catalytic domain of F(1) is coupled via a rotary mechanism of the central stalk subunits to proton translocation. Key component of the F(0) channel; it plays a direct role in translocation across the membrane. A homomeric c-ring of between 10-14 subunits forms the central stalk rotor element with the F(1) delta and epsilon subunits. The chain is ATP synthase subunit c 2 from Syntrophotalea carbinolica (strain DSM 2380 / NBRC 103641 / GraBd1) (Pelobacter carbinolicus).